Consider the following 156-residue polypeptide: Small ribosomal subunit protein uS7 (156 aa).

It belongs to the universal ribosomal protein uS7 family. As to quaternary structure, part of the 30S ribosomal subunit. Contacts proteins S9 and S11.

One of the primary rRNA binding proteins, it binds directly to 16S rRNA where it nucleates assembly of the head domain of the 30S subunit. Is located at the subunit interface close to the decoding center, probably blocks exit of the E-site tRNA. The polypeptide is Small ribosomal subunit protein uS7 (Shewanella sp. (strain ANA-3)).